We begin with the raw amino-acid sequence, 495 residues long: Ferruginol synthase (495 aa).

A topological domain (lumenal) is located at residue Met-1. The helical transmembrane segment at 2–22 (DSFPLLAALFFIAATITFLSF) threads the bilayer. Over 23–495 (RRRRNLPPGP…PLRIIPIVKS (473 aa)) the chain is Cytoplasmic. Cys-437 is a binding site for heme.

This sequence belongs to the cytochrome P450 family. Requires heme as cofactor. Expression is more abundant in the rhizome.

The protein resides in the endoplasmic reticulum membrane. It carries out the reaction abieta-8,11,13-triene + reduced [NADPH--hemoprotein reductase] + O2 = ferruginol + oxidized [NADPH--hemoprotein reductase] + H2O + H(+). Its function is as follows. Cytochrome P450 enzyme (CYP) which catalyzes a unique two-electron oxidation cascade on abieta-8,11,13-triene to produce ferruginol, an intermediate in tanshinone biosynthesis. The sequence is that of Ferruginol synthase from Salvia miltiorrhiza (Chinese sage).